A 459-amino-acid chain; its full sequence is MNRLPSSASALACSAHALNLIEKRTLNHEEMKALNREVIDYFKEHVNPGFLEYRKSVTAGGDYGAVEWQAGSLNTLVDTQGQEFIDCLGGFGIFNVGHRNPVVVSAVQNQLAKQPLHSQELLDPLRAMLAKTLAALTPGKLKYSFFCNSGTESVEAALKLAKAYQSPRGKFTFIATSGAFHGKSLGALSATAKSIFRRPFMPLLPGFRHVPFGNIDAMSMAFSEGKKTGDEIAAVILEPIQGEGGVILPPQGYLTEVRKLCDEFGALMILDEVQTGMGRTGKMFACEHENVQPDILCLAKALGGGVMPIGATIATEEVFSVLFDNPFLHTTTFGGNPLACAAALATINVLLEQNLPAQAEQKGDTLLDGFRQLAREYPNLVHDARGKGMLMAIEFVDNETGYRFASEMFRQRVLVAGTLNNAKTIRIEPPLTLTIELCEQVLKSARNALAAMQVSVEEV.

Pyridoxal 5'-phosphate contacts are provided by residues 150 to 151 (GT) and Q274. K300 is modified (N6-(pyridoxal phosphate)lysine). T332 provides a ligand contact to pyridoxal 5'-phosphate.

It belongs to the class-III pyridoxal-phosphate-dependent aminotransferase family. Putrescine aminotransferase subfamily. The cofactor is pyridoxal 5'-phosphate.

The catalysed reaction is an alkane-alpha,omega-diamine + 2-oxoglutarate = an omega-aminoaldehyde + L-glutamate. It catalyses the reaction putrescine + 2-oxoglutarate = 1-pyrroline + L-glutamate + H2O. It carries out the reaction cadaverine + 2-oxoglutarate = 5-aminopentanal + L-glutamate. It participates in amine and polyamine degradation; putrescine degradation; 4-aminobutanal from putrescine (transaminase route): step 1/1. Functionally, catalyzes the aminotransferase reaction from putrescine to 2-oxoglutarate, leading to glutamate and 4-aminobutanal, which spontaneously cyclizes to form 1-pyrroline. This is the first step in one of two pathways for putrescine degradation, where putrescine is converted into 4-aminobutanoate (gamma-aminobutyrate or GABA) via 4-aminobutanal. Also functions as a cadaverine transaminase in a a L-lysine degradation pathway to succinate that proceeds via cadaverine, glutarate and L-2-hydroxyglutarate. The sequence is that of Putrescine aminotransferase from Salmonella choleraesuis (strain SC-B67).